The chain runs to 247 residues: Ubiquinone biosynthesis O-methyltransferase (247 aa).

Residues arginine 39, glycine 70, aspartate 91, and methionine 134 each coordinate S-adenosyl-L-methionine.

Belongs to the methyltransferase superfamily. UbiG/COQ3 family.

The enzyme catalyses a 3-demethylubiquinol + S-adenosyl-L-methionine = a ubiquinol + S-adenosyl-L-homocysteine + H(+). It catalyses the reaction a 3-(all-trans-polyprenyl)benzene-1,2-diol + S-adenosyl-L-methionine = a 2-methoxy-6-(all-trans-polyprenyl)phenol + S-adenosyl-L-homocysteine + H(+). The protein operates within cofactor biosynthesis; ubiquinone biosynthesis. O-methyltransferase that catalyzes the 2 O-methylation steps in the ubiquinone biosynthetic pathway. This is Ubiquinone biosynthesis O-methyltransferase from Cereibacter sphaeroides (strain ATCC 17025 / ATH 2.4.3) (Rhodobacter sphaeroides).